We begin with the raw amino-acid sequence, 272 residues long: Indole-3-glycerol phosphate synthase (272 aa).

The protein belongs to the TrpC family.

The enzyme catalyses 1-(2-carboxyphenylamino)-1-deoxy-D-ribulose 5-phosphate + H(+) = (1S,2R)-1-C-(indol-3-yl)glycerol 3-phosphate + CO2 + H2O. It functions in the pathway amino-acid biosynthesis; L-tryptophan biosynthesis; L-tryptophan from chorismate: step 4/5. The chain is Indole-3-glycerol phosphate synthase from Arthrobacter sp. (strain FB24).